We begin with the raw amino-acid sequence, 383 residues long: Opsin Rh3 (383 aa).

Residues 1 to 57 (MESGNVSSSLFGNVSTALRPEARLSAETRLLGWNVPPEELRHIPEHWLTYPEPPESM) lie on the Extracellular side of the membrane. N-linked (GlcNAc...) asparagine glycosylation occurs at Asn13. The chain crosses the membrane as a helical span at residues 58 to 82 (NYLLGTLYIFFTLMSMLGNGLVIWV). Over 83 to 94 (FSAAKSLRTPSN) the chain is Cytoplasmic. Residues 95 to 119 (ILVINLAFCDFMMMVKTPIFIYNSF) form a helical membrane-spanning segment. Residues 120–133 (HQGYALGHLGCQIF) lie on the Extracellular side of the membrane. Cys130 and Cys207 are oxidised to a cystine. Residues 134–153 (GIIGSYTGIAAGATNAFIAY) form a helical membrane-spanning segment. Over 154 to 171 (DRFNVITRPMEGKMTHGK) the chain is Cytoplasmic. A helical transmembrane segment spans residues 172 to 196 (AIAMIIFIYMYATPWVVACYTETWG). Topologically, residues 197 to 220 (RFVPEGYLTSCTFDYLTDNFDTRL) are extracellular. The chain crosses the membrane as a helical span at residues 221–248 (FVACIFFFSFVCPTTMITYYYSQIVGHV). At 249 to 284 (FSHEKALRDQAKKMNVESLRSNVDKNKETAEIRIAK) the chain is on the cytoplasmic side. Residues 285-308 (AAITICFLFFCSWTPYGVMSLIGA) form a helical membrane-spanning segment. Residues 309-316 (FGDKTLLT) lie on the Extracellular side of the membrane. The helical transmembrane segment at 317-341 (PGATMIPACACKMVACIDPFVYAIS) threads the bilayer. Lys328 is subject to N6-(retinylidene)lysine. Over 342–383 (HPRYRMELQKRCPWLALNEKAPESSAVASTSTTQEPQQTTAA) the chain is Cytoplasmic. The disordered stretch occupies residues 362 to 383 (APESSAVASTSTTQEPQQTTAA). The span at 369 to 383 (ASTSTTQEPQQTTAA) shows a compositional bias: low complexity.

The protein belongs to the G-protein coupled receptor 1 family. Opsin subfamily. In terms of processing, phosphorylated on some or all of the serine and threonine residues present in the C-terminal region.

The protein localises to the membrane. Functionally, visual pigments are the light-absorbing molecules that mediate vision. They consist of an apoprotein, opsin, covalently linked to cis-retinal. The chain is Opsin Rh3 (Rh3) from Drosophila melanogaster (Fruit fly).